Reading from the N-terminus, the 224-residue chain is Ornithine decarboxylase antizyme (224 aa).

This sequence belongs to the ODC antizyme family. As to quaternary structure, interacts with ODC and thereby sterically blocks ODC homodimerization.

In terms of biological role, ornithine decarboxylase (ODC) antizyme protein that negatively regulates ODC activity and intracellular polyamine biosynthesis in response to increased intracellular polyamine levels. Binds to ODC monomers, inhibiting the assembly of the functional ODC homodimer, and targets the monomers for ubiquitin-independent proteolytic destruction by the 26S proteasome. In Schizosaccharomyces octosporus (Fission yeast), this protein is Ornithine decarboxylase antizyme (spa1).